Reading from the N-terminus, the 463-residue chain is UDP-N-acetylmuramate--L-alanine ligase (463 aa).

Residue 112–118 participates in ATP binding; it reads GTHGKTT.

This sequence belongs to the MurCDEF family.

The protein resides in the cytoplasm. It carries out the reaction UDP-N-acetyl-alpha-D-muramate + L-alanine + ATP = UDP-N-acetyl-alpha-D-muramoyl-L-alanine + ADP + phosphate + H(+). It functions in the pathway cell wall biogenesis; peptidoglycan biosynthesis. In terms of biological role, cell wall formation. The protein is UDP-N-acetylmuramate--L-alanine ligase of Dechloromonas aromatica (strain RCB).